Here is a 287-residue protein sequence, read N- to C-terminus: ATP synthase gamma chain (287 aa).

This sequence belongs to the ATPase gamma chain family. F-type ATPases have 2 components, CF(1) - the catalytic core - and CF(0) - the membrane proton channel. CF(1) has five subunits: alpha(3), beta(3), gamma(1), delta(1), epsilon(1). CF(0) has three main subunits: a, b and c.

The protein localises to the cell inner membrane. Produces ATP from ADP in the presence of a proton gradient across the membrane. The gamma chain is believed to be important in regulating ATPase activity and the flow of protons through the CF(0) complex. The chain is ATP synthase gamma chain from Geobacter metallireducens (strain ATCC 53774 / DSM 7210 / GS-15).